The sequence spans 1003 residues: Serine/threonine-protein kinase spk-1 (1003 aa).

Disordered regions lie at residues 92 to 112 (NSTNEEEEISSQEINTSTQNE), 169 to 309 (NEND…SATS), and 337 to 408 (RPSI…KRGG). The segment covering 202–211 (SDEEDVESQD) has biased composition (acidic residues). A compositionally biased stretch (basic and acidic residues) spans 248–265 (SNDDKNEKDVLVDEDTSK). A compositionally biased stretch (low complexity) spans 285–300 (TIDSSVSSSTSSSSTG). Residues 346–359 (KKTEVNANEERLDD) show a composition bias toward basic and acidic residues. One can recognise a Protein kinase domain in the interval 422–904 (YHVIRKLGWG…AKIALKHPFL (483 aa)). Residues 428 to 436 (LGWGHFSTV) and K451 contribute to the ATP site. D555 (proton acceptor) is an active-site residue. Residues 927 to 1003 (DGLIPEPFDG…DIERFQLDLQ (77 aa)) form a disordered region. The segment covering 936 to 953 (GNEHQEVYRDENDSRSAS) has biased composition (basic and acidic residues). The span at 954-964 (ERSANSRSAGG) shows a compositional bias: low complexity. Polar residues predominate over residues 983–992 (VITNNETTDI). The span at 994-1003 (DIERFQLDLQ) shows a compositional bias: basic and acidic residues.

The protein belongs to the protein kinase superfamily. Ser/Thr protein kinase family. In terms of assembly, interacts with rsp-3. In terms of tissue distribution, predominantly coexpressed with rsp-3 in adult hermaphrodite germlines.

The enzyme catalyses L-seryl-[protein] + ATP = O-phospho-L-seryl-[protein] + ADP + H(+). It carries out the reaction L-threonyl-[protein] + ATP = O-phospho-L-threonyl-[protein] + ADP + H(+). In terms of biological role, required for embryogenesis and germline development in both adult hermaphrodites and males. SR-protein kinase (SRPK) that binds directly to and phosphorylates the RS domain of rsp-3/CeSF2 in vitro. The polypeptide is Serine/threonine-protein kinase spk-1 (spk-1) (Caenorhabditis elegans).